Here is a 99-residue protein sequence, read N- to C-terminus: DNA-binding protein Fis (99 aa).

Positions 75-94 (QTRAANMLGINRGTLRKKLK) form a DNA-binding region, H-T-H motif.

It belongs to the transcriptional regulatory Fis family. Homodimer.

Activates ribosomal RNA transcription. Plays a direct role in upstream activation of rRNA promoters. This chain is DNA-binding protein Fis, found in Haemophilus influenzae (strain 86-028NP).